Reading from the N-terminus, the 556-residue chain is DNA ligase (556 aa).

Glutamate 245 is a binding site for ATP. The active-site N6-AMP-lysine intermediate is lysine 247. Residues arginine 252, arginine 267, glutamate 296, phenylalanine 336, arginine 408, and lysine 414 each coordinate ATP.

The protein belongs to the ATP-dependent DNA ligase family. Requires Mg(2+) as cofactor.

The enzyme catalyses ATP + (deoxyribonucleotide)n-3'-hydroxyl + 5'-phospho-(deoxyribonucleotide)m = (deoxyribonucleotide)n+m + AMP + diphosphate.. In terms of biological role, DNA ligase that seals nicks in double-stranded DNA during DNA replication, DNA recombination and DNA repair. The sequence is that of DNA ligase from Methanosphaerula palustris (strain ATCC BAA-1556 / DSM 19958 / E1-9c).